The chain runs to 407 residues: Arginine deiminase (407 aa).

Catalysis depends on Cys-397, which acts as the Amidino-cysteine intermediate.

The protein belongs to the arginine deiminase family.

Its subcellular location is the cytoplasm. The catalysed reaction is L-arginine + H2O = L-citrulline + NH4(+). It participates in amino-acid degradation; L-arginine degradation via ADI pathway; carbamoyl phosphate from L-arginine: step 1/2. This is Arginine deiminase from Limosilactobacillus fermentum (strain NBRC 3956 / LMG 18251) (Lactobacillus fermentum).